Consider the following 449-residue polypeptide: Probable ubiquitin carboxyl-terminal hydrolase 8 (449 aa).

The UBP-type zinc finger occupies 6 to 113; the sequence is EGCQHLKLKP…FKIKNIKAWQ (108 aa). C8, H10, C38, C41, C51, C54, C59, H64, H68, H74, C87, and C90 together coordinate Zn(2+). In terms of domain architecture, USP spans 145–435; it reads RGIQNLGATC…QAYLLFYHER (291 aa). C154 (nucleophile) is an active-site residue. H178, C183, C188, C191, H246, C257, C259, H262, C275, C278, C317, and C320 together coordinate Zn(2+). H395 (proton acceptor) is an active-site residue.

This sequence belongs to the peptidase C19 family. UBP8 subfamily. Component of the 1.8 MDa SAGA (Spt-Ada-Gcn5 acetyltransferase) complex, which is composed of 19 subunits tra1, spt7, taf5, ngg1/ada3, sgf73, spt20, spt8, taf12, taf6, hfi1/ada1, ubp8, gcn5, ada2, spt3, sgf29, taf10, taf9, sgf11 and sus1. The SAGA complex is composed of 4 modules, namely the HAT (histone acetyltransferase) module (gcn5, ada2, ngg1/ada3 and sgf29), the DUB (deubiquitinating) module (ubp8, sgf11, sgf73 and sus1), the core or TAF (TBP-associated factor) module (taf5, taf6, taf9, taf10 and taf12), and the Tra1 or SPT (Suppressor of Ty) module (tra1, hfi1/ada1, spt3, spt7, spt8 and spt20). The Tra1/SPT module binds activators, the core module recruits TBP (TATA-binding protein), the HAT module contains the histone H3 acetyltransferase gcn5, and the DUB module comprises the histone H2B deubiquitinase ubp8.

The protein localises to the nucleus. The protein resides in the nucleoplasm. It catalyses the reaction Thiol-dependent hydrolysis of ester, thioester, amide, peptide and isopeptide bonds formed by the C-terminal Gly of ubiquitin (a 76-residue protein attached to proteins as an intracellular targeting signal).. In terms of biological role, histone deubiquitinating enzyme component of the transcription coactivator SAGA complex. SAGA acts as a general cofactor required for essentially all RNA polymerase II transcription. At the promoters, SAGA is required for transcription pre-initiation complex (PIC) recruitment. It influences RNA polymerase II transcriptional activity through different activities such as TBP interaction (via core/TAF module) and promoter selectivity, interaction with transcription activators (via Tra1/SPT module), and chromatin modification through histone acetylation (via HAT module) and deubiquitination (via DUB module). SAGA preferentially acetylates histones H3 (to form H3K9ac, H3K14ac, H3K18ac and H3K23ac) and H2B and deubiquitinates histone H2B. SAGA interacts with DNA via upstream activating sequences (UASs). Within the DUB module, the correctly positioned zinc finger domains of sgf11 and sgf73 are both required to fully activate the ubiquitin hydrolase ubp8. The DUB module is also linked to the splicing efficiency of many transcripts. In Schizosaccharomyces pombe (strain 972 / ATCC 24843) (Fission yeast), this protein is Probable ubiquitin carboxyl-terminal hydrolase 8 (ubp8).